Here is a 167-residue protein sequence, read N- to C-terminus: MAHNHWCNLFSVALVCVVALVMVQYSVAQNSPQDYVDAHNAARSAVNVGPVTWDESVAAFARQYAQSRAGDCRLVHSGDPRYGENLAFGSGFELTGRNAVDMWVAERNDYNPNTNTCAPGKVCGHYTQVVWRNSVRIGCARVRCNNGAWFITCNYSPPGNYAGQRPY.

The first 29 residues, 1–29 (MAHNHWCNLFSVALVCVVALVMVQYSVAQ), serve as a signal peptide directing secretion. The SCP domain occupies 36-155 (VDAHNAARSA…NGAWFITCNY (120 aa)). 3 disulfide bridges follow: C72–C144, C117–C123, and C139–C153.

This sequence belongs to the CRISP family.

Its function is as follows. Probably involved in the defense reaction of plants against pathogens. This Sambucus nigra (European elder) protein is Pathogenesis-related protein PR-1 type.